We begin with the raw amino-acid sequence, 407 residues long: Carbamoyl phosphate synthase small chain (407 aa).

Residues 1–203 (MSQNESGTIA…EPCGEYEGKE (203 aa)) form a CPSase region. Residues serine 61, glycine 255, and glycine 257 each contribute to the L-glutamine site. The Glutamine amidotransferase type-1 domain occupies 207–405 (TVAAVDLGIK…CELMKNNSKE (199 aa)). The active-site Nucleophile is the cysteine 283. L-glutamine contacts are provided by phenylalanine 284, glutamine 287, asparagine 325, glycine 327, and phenylalanine 328. Active-site residues include histidine 378 and glutamate 380.

This sequence belongs to the CarA family. In terms of assembly, composed of two chains; the small (or glutamine) chain promotes the hydrolysis of glutamine to ammonia, which is used by the large (or ammonia) chain to synthesize carbamoyl phosphate. Tetramer of heterodimers (alpha,beta)4.

The enzyme catalyses hydrogencarbonate + L-glutamine + 2 ATP + H2O = carbamoyl phosphate + L-glutamate + 2 ADP + phosphate + 2 H(+). It carries out the reaction L-glutamine + H2O = L-glutamate + NH4(+). It participates in amino-acid biosynthesis; L-arginine biosynthesis; carbamoyl phosphate from bicarbonate: step 1/1. The protein operates within pyrimidine metabolism; UMP biosynthesis via de novo pathway; (S)-dihydroorotate from bicarbonate: step 1/3. Functionally, small subunit of the glutamine-dependent carbamoyl phosphate synthetase (CPSase). CPSase catalyzes the formation of carbamoyl phosphate from the ammonia moiety of glutamine, carbonate, and phosphate donated by ATP, constituting the first step of 2 biosynthetic pathways, one leading to arginine and/or urea and the other to pyrimidine nucleotides. The small subunit (glutamine amidotransferase) binds and cleaves glutamine to supply the large subunit with the substrate ammonia. The protein is Carbamoyl phosphate synthase small chain of Bifidobacterium longum (strain NCC 2705).